The following is a 278-amino-acid chain: Acyl-[acyl-carrier-protein]--UDP-N-acetylglucosamine O-acyltransferase (278 aa).

The protein belongs to the transferase hexapeptide repeat family. LpxA subfamily. Homotrimer.

The protein resides in the cytoplasm. The catalysed reaction is a (3R)-hydroxyacyl-[ACP] + UDP-N-acetyl-alpha-D-glucosamine = a UDP-3-O-[(3R)-3-hydroxyacyl]-N-acetyl-alpha-D-glucosamine + holo-[ACP]. It functions in the pathway glycolipid biosynthesis; lipid IV(A) biosynthesis; lipid IV(A) from (3R)-3-hydroxytetradecanoyl-[acyl-carrier-protein] and UDP-N-acetyl-alpha-D-glucosamine: step 1/6. Its function is as follows. Involved in the biosynthesis of lipid A, a phosphorylated glycolipid that anchors the lipopolysaccharide to the outer membrane of the cell. The chain is Acyl-[acyl-carrier-protein]--UDP-N-acetylglucosamine O-acyltransferase from Brucella abortus (strain S19).